The following is a 527-amino-acid chain: MEYGTRKLSDVYEVSEILGRGGFSVVRKGTRKSNNDDEKSQSQSKSQSQSQVAIKTLRRLGTSNNLPRKKDGGENSTETMMKFPTMRQVSVSDALLTNEILVMRRIVENVSPHPNVIDLYDVYEDTNGVHLVLELCSGGELFDRIVAQDKYSETEASTVVHQIVAGLEAIHRANIIHRDLKPENCLFLDVGKDSSLKIMDFGLSSVEEFTDPVVGLFGSIDYVSPEALSQGKITTKSDMWSLGVILYILLSGYPPFIAQNNRQKQQMILNGNFSFYEKTWKGISQSAKNLISSLLTVDPAKRPSAQELLSDPWVKGEKAKDDQMDPEIVSRLQRFNARRKLRAAAIASVWSSTIFLRTKKLKSLVGSYDLKEDEIENLRMHFKKICADRDNATLCEFEEVLKAMKMPSLIPFAARIFDLFDNNRDGTVDMREILCGFSSLKNSKGEDALRLCFQMYDTDRSGCITKEEVASMLRALPYDCLPTDITEPGKLDEIFDLMDANSDGKVTFDEFKAAMQRDSSLQDVVLS.

In terms of domain architecture, Protein kinase spans 12-314 (YEVSEILGRG…AQELLSDPWV (303 aa)). Residue 18 to 26 (LGRGGFSVV) participates in ATP binding. The interval 25–51 (VVRKGTRKSNNDDEKSQSQSKSQSQSQ) is disordered. Residues 41-51 (QSQSKSQSQSQ) show a composition bias toward low complexity. K55 contributes to the ATP binding site. Positions 59–78 (RLGTSNNLPRKKDGGENSTE) are disordered. The Proton acceptor role is filled by D179. The chain crosses the membrane as a helical span at residues 239 to 255 (MWSLGVILYILLSGYPP). T279 bears the Phosphothreonine mark. The interval 337-350 (ARRKLRAAAIASVW) is calmodulin-binding. A coiled-coil region spans residues 358–379 (TKKLKSLVGSYDLKEDEIENLR). EF-hand domains lie at 408–443 (SLIPFAARIFDLFDNNRDGTVDMREILCGFSSLKNS), 444–479 (KGEDALRLCFQMYDTDRSGCITKEEVASMLRALPYD), and 486–521 (TEPGKLDEIFDLMDANSDGKVTFDEFKAAMQRDSSL). Ca(2+) contacts are provided by D421, N423, D425, T427, E432, D457, D459, S461, C463, E468, D499, N501, D503, K505, and E510.

The protein belongs to the protein kinase superfamily. CAMK Ser/Thr protein kinase family. CaMK subfamily. Post-translationally, autophosphorylation.

It is found in the membrane. The enzyme catalyses L-seryl-[protein] + ATP = O-phospho-L-seryl-[protein] + ADP + H(+). It carries out the reaction L-threonyl-[protein] + ATP = O-phospho-L-threonyl-[protein] + ADP + H(+). With respect to regulation, activated by calcium. Autophosphorylation may play an important role in the regulation of the kinase activity. Its function is as follows. Protein kinase that recognizes the calcium spiking induced by Nod factors and translates this signal to components controlling nodulation and mycorrhizal infection responses. This Pisum sativum (Garden pea) protein is Calcium and calcium/calmodulin-dependent serine/threonine-protein kinase (SYM9).